The following is a 713-amino-acid chain: Probable glutamate carboxypeptidase VP8 (713 aa).

The Cytoplasmic segment spans residues 1–10; it reads MPHSVLARLP. The chain crosses the membrane as a helical; Signal-anchor for type II membrane protein span at residues 11-31; sequence PGSVRLVAAFGLLLLVSLLVL. The Extracellular segment spans residues 32–713; that stretch reads HRRPGRPHVA…PTNFSSLVTP (682 aa). N-linked (GlcNAc...) asparagine glycosylation is found at asparagine 66 and asparagine 311. The interval 245–539 is catalytic; the sequence is ATSGAERLKF…EIWGLLALRL (295 aa). Histidine 345 and aspartate 355 together coordinate Zn(2+). The active-site Nucleophile is the glutamate 392. 3 residues coordinate Zn(2+): glutamate 393, aspartate 421, and histidine 505. Residues asparagine 667 and asparagine 706 are each glycosylated (N-linked (GlcNAc...) asparagine).

The protein belongs to the peptidase M28 family. M28B subfamily. Zn(2+) serves as cofactor.

Its subcellular location is the cell membrane. The enzyme catalyses Release of an unsubstituted, C-terminal glutamyl residue, typically from Ac-Asp-Glu or folylpoly-gamma-glutamates.. Involved in the regulation of meristem development and seed maturation processes. Mediates regulation of embryonic regulatory genes and genes controlling abscisic acid (ABA) biosynthesis and turnover in developing seeds. May be required for the synthesis of small signaling molecules that integrates meristem and embryo formation in seeds. The polypeptide is Probable glutamate carboxypeptidase VP8 (Zea mays (Maize)).